A 178-amino-acid chain; its full sequence is Adenine phosphoribosyltransferase (178 aa).

Belongs to the purine/pyrimidine phosphoribosyltransferase family. In terms of assembly, homodimer.

The protein resides in the cytoplasm. It catalyses the reaction AMP + diphosphate = 5-phospho-alpha-D-ribose 1-diphosphate + adenine. Its pathway is purine metabolism; AMP biosynthesis via salvage pathway; AMP from adenine: step 1/1. Functionally, catalyzes a salvage reaction resulting in the formation of AMP, that is energically less costly than de novo synthesis. This chain is Adenine phosphoribosyltransferase, found in Helicobacter hepaticus (strain ATCC 51449 / 3B1).